The primary structure comprises 274 residues: Glutamate racemase (274 aa).

Residues 9–10 (DS) and 41–42 (YG) each bind substrate. Cysteine 73 (proton donor/acceptor) is an active-site residue. 74-75 (NT) contributes to the substrate binding site. Cysteine 183 functions as the Proton donor/acceptor in the catalytic mechanism. 184–185 (TH) serves as a coordination point for substrate.

Belongs to the aspartate/glutamate racemases family.

The catalysed reaction is L-glutamate = D-glutamate. It functions in the pathway cell wall biogenesis; peptidoglycan biosynthesis. Functionally, provides the (R)-glutamate required for cell wall biosynthesis. The protein is Glutamate racemase of Shewanella baltica (strain OS185).